Here is a 648-residue protein sequence, read N- to C-terminus: Interferon-induced GTP-binding protein Mx1 (648 aa).

The residue at position 1 (M1) is an N-acetylmethionine. The disordered stretch occupies residues 1–26 (MVHSDLGIEELDSPESSLNGSEDMES). One can recognise a Dynamin-type G domain in the interval 56 to 329 (DLALPAIAVI…LIMHICKTLP (274 aa)). Residues 66-73 (GDQSSGKS) form a G1 motif region. Position 66–73 (66–73 (GDQSSGKS)) interacts with GTP. A G2 motif region spans residues 91–93 (VTR). The tract at residues 167–170 (DLPG) is G3 motif. GTP is bound by residues 167–171 (DLPGI) and 236–239 (TKPD). The G4 motif stretch occupies residues 236–239 (TKPD). The tract at residues 268–271 (KCRG) is G5 motif. The segment at 330–355 (LLENQIKETHQRITEELQKYGKDIPE) is bundle signaling element (BSE). The segment at 355-522 (EEESEKMFCL…HFQMEQLVYC (168 aa)) is middle domain. The tract at residues 356–618 (EESEKMFCLI…KDQYDWLLKE (263 aa)) is stalk. The tract at residues 543–546 (KNKK) is critical for lipid-binding. The GED domain occupies 560-648 (TDEIFQHLTA…ARQRLAKFPG (89 aa)).

The protein belongs to the TRAFAC class dynamin-like GTPase superfamily. Dynamin/Fzo/YdjA family. Homooligomer. Oligomerizes into multimeric filamentous or ring-like structures by virtue of its stalk domain. Oligomerization is critical for GTPase activity, protein stability, and recognition of viral target structures. Interacts with TRPC1, TRPC3, TRPC4, TRPC5, TRPC6 and TRPC7. Interacts with HSPA5. Interacts with TUBB/TUBB5. Interacts with DDX39A and DDX39B. ISGylated. In terms of tissue distribution, ubiquitously expressed.

The protein localises to the cytoplasm. The protein resides in the endoplasmic reticulum membrane. Its subcellular location is the perinuclear region. It localises to the nucleus. In terms of biological role, interferon-induced dynamin-like GTPase with antiviral activity against rabies virus (RABV), vesicular stomatitis virus (VSV) and murine pneumonia virus (MPV). Isoform 1 but not isoform 2 shows antiviral activity against vesicular stomatitis virus (VSV). The protein is Interferon-induced GTP-binding protein Mx1 (MX1) of Bos taurus (Bovine).